We begin with the raw amino-acid sequence, 574 residues long: Transmembrane glycoprotein NMB (574 aa).

The N-terminal stretch at 1 to 22 is a signal peptide; sequence MESLCGVLGFLLLAAGLPLQAA. The Extracellular segment spans residues 23–502; it reads KRFRDVLGHE…DPDSPLRAVN (480 aa). N-linked (GlcNAc...) asparagine glycans are attached at residues N93, N134, N200, N249, N275, N296, N300, N306, and N312. A PKD domain is found at 250–338; it reads LSDEIFLRDL…STPPPPSTPP (89 aa). The tract at residues 320 to 353 is disordered; the sequence is PGPCPPPSPSTPPPPSTPPSPPPSPLPTLSTPSP. Over residues 321–345 the composition is skewed to pro residues; that stretch reads GPCPPPSPSTPPPPSTPPSPPPSPL. N-linked (GlcNAc...) asparagine glycosylation is found at N463 and N471. Residues 503-523 traverse the membrane as a helical segment; the sequence is GVLISIGCLAVLVTMVTILLY. Residues 524–574 are Cytoplasmic-facing; it reads KKHKAYKPIGNCPRNTVKGKGLSVLLSHAKAPFFRGDQEKDPLLQDKPRTL. S546 carries the post-translational modification Phosphoserine. The short motif at 558 to 560 is the Cell attachment site element; that stretch reads RGD.

This sequence belongs to the PMEL/NMB family. In terms of tissue distribution, may be up-regulated in bone metastatic breast cancer cells.

The protein resides in the cell membrane. It is found in the melanosome membrane. Its subcellular location is the early endosome membrane. Could be a melanogenic enzyme. The sequence is that of Transmembrane glycoprotein NMB (Gpnmb) from Mus musculus (Mouse).